The following is a 522-amino-acid chain: Protein GDS1 (522 aa).

Disordered regions lie at residues 56–88, 222–268, 300–391, and 433–489; these read ALDDNNLAGSSFSSSQEIKATKPKKDFGAPKKD, QQLE…SSNS, LSPS…SHNA, and STQT…SRNE. The segment covering 62–73 has biased composition (polar residues); sequence LAGSSFSSSQEI. Residues 74 to 88 show a composition bias toward basic and acidic residues; the sequence is KATKPKKDFGAPKKD. Composition is skewed to polar residues over residues 222-236, 244-260, 300-314, and 355-366; these read QQLETSGDTSDFNSN, SSNQLVNNDSYSSSMTD, LSPSMSNNQQQLLTP, and SQSLSVLSTPKK. Low complexity predominate over residues 368–378; it reads SSASLSTFASS. Positions 379–391 are enriched in polar residues; that stretch reads KNISPDSSLSHNA. Low complexity predominate over residues 439–467; it reads ESSSESSQYNSSSSSPVNSAAASSAESLS. The span at 468–489 shows a compositional bias: polar residues; it reads DINSSQDNGRESNPSSQESRNE.

Involved in nuclear control of mitochondria. In Saccharomyces cerevisiae (strain ATCC 204508 / S288c) (Baker's yeast), this protein is Protein GDS1 (GDS1).